The primary structure comprises 265 residues: Selenoprotein Pb (265 aa).

Positions 1-18 (MQALWPLLLSALPALLGA) are cleaved as a signal peptide. A glycan (N-linked (GlcNAc...) asparagine) is linked at Asn28. Position 64 (Sec64) is a non-standard amino acid, selenocysteine. Asn88, Asn178, Asn184, and Asn207 each carry an N-linked (GlcNAc...) asparagine glycan. The disordered stretch occupies residues 188–265 (SESSDSTKND…SHQEHVHNHR (78 aa)). Residues 201–211 (ENNQRPNSTEP) are compositionally biased toward polar residues. Residues 215 to 231 (AHHHHHQQHEPHHHHHN) show a composition bias toward basic residues. Residues 239-265 (KSGDSDVTGKPKEPPHHSHQEHVHNHR) show a composition bias toward basic and acidic residues.

It is found in the secreted. Its function is as follows. Might be responsible for some of the extracellular antioxidant defense properties of selenium. The protein is Selenoprotein Pb (sepp1b) of Danio rerio (Zebrafish).